Reading from the N-terminus, the 875-residue chain is DNA mismatch repair protein MutS (875 aa).

Position 626-633 (626-633 (GPNMAGKS)) interacts with ATP. A disordered region spans residues 830 to 855 (RAAPPPPAPAAPKTSPVEERLREIQP). A compositionally biased stretch (basic and acidic residues) spans 845–855 (PVEERLREIQP).

This sequence belongs to the DNA mismatch repair MutS family.

Functionally, this protein is involved in the repair of mismatches in DNA. It is possible that it carries out the mismatch recognition step. This protein has a weak ATPase activity. The protein is DNA mismatch repair protein MutS of Cereibacter sphaeroides (strain ATCC 17023 / DSM 158 / JCM 6121 / CCUG 31486 / LMG 2827 / NBRC 12203 / NCIMB 8253 / ATH 2.4.1.) (Rhodobacter sphaeroides).